The chain runs to 286 residues: Pollen allergen Phl p 5a (286 aa).

Positions A1–A34 are enriched in low complexity. The segment at A1–T35 is disordered.

It belongs to the Poa p IX/Phl p VI allergen family.

The protein localises to the secreted. The chain is Pollen allergen Phl p 5a from Phleum pratense (Common timothy).